The following is a 327-amino-acid chain: Flap endonuclease 1 (327 aa).

Positions M1 to R98 are N-domain. D27, D80, E152, E154, D173, D175, and D226 together coordinate Mg(2+). The I-domain stretch occupies residues E116–G246. The interaction with PCNA stretch occupies residues S319–F327.

Belongs to the XPG/RAD2 endonuclease family. FEN1 subfamily. In terms of assembly, interacts with PCNA. PCNA stimulates the nuclease activity without altering cleavage specificity. The cofactor is Mg(2+).

Its function is as follows. Structure-specific nuclease with 5'-flap endonuclease and 5'-3' exonuclease activities involved in DNA replication and repair. During DNA replication, cleaves the 5'-overhanging flap structure that is generated by displacement synthesis when DNA polymerase encounters the 5'-end of a downstream Okazaki fragment. Binds the unpaired 3'-DNA end and kinks the DNA to facilitate 5' cleavage specificity. Cleaves one nucleotide into the double-stranded DNA from the junction in flap DNA, leaving a nick for ligation. Also involved in the base excision repair (BER) pathway. Acts as a genome stabilization factor that prevents flaps from equilibrating into structures that lead to duplications and deletions. Also possesses 5'-3' exonuclease activity on nicked or gapped double-stranded DNA. The chain is Flap endonuclease 1 from Methanobrevibacter smithii (strain ATCC 35061 / DSM 861 / OCM 144 / PS).